Reading from the N-terminus, the 457-residue chain is UDP-glycosyltransferase 72C1 (457 aa).

UDP-alpha-D-glucose-binding positions include S272, 343 to 344, 361 to 369, and 383 to 386; these read WA, HCGWNSVLE, and YSEQ.

This sequence belongs to the UDP-glycosyltransferase family.

The chain is UDP-glycosyltransferase 72C1 (UGT72C1) from Arabidopsis thaliana (Mouse-ear cress).